A 743-amino-acid chain; its full sequence is Dolichyl-phosphate-mannose--protein mannosyltransferase 5 (743 aa).

Residues 1–46 lie on the Lumenal side of the membrane; it reads MNKEHLLKVDPIPDVTIKRGPLRSFLITKPCDNLSSLRTVTSSKEK. N-linked (GlcNAc...) asparagine glycosylation is present at N33. Residues 47–67 traverse the membrane as a helical segment; that stretch reads LLVGCLLIFTAIVRLHNISLP. Over 68-129 the chain is Cytoplasmic; sequence NSVVFGENEV…IGTEYTANVP (62 aa). The helical transmembrane segment at 130–150 threads the bilayer; the sequence is YVAMRFFSATLGIVSVLVLYL. The Lumenal portion of the chain corresponds to 151–158; it reads TLRVSGVK. Residues 159–179 form a helical membrane-spanning segment; sequence IAVAAICAVCFAIENSFVTLS. R180 is a topological domain (cytoplasmic). The helical transmembrane segment at 181-201 threads the bilayer; it reads FTLIEGPFVFFMACAVYFFRR. The Lumenal segment spans residues 202–231; the sequence is SELYLPNSCKANKSLLAASIALGFAVSSKW. N-linked (GlcNAc...) asparagine glycosylation is present at N213. Residues 232 to 252 form a helical membrane-spanning segment; it reads AGLFTIAWAGIIVLWRVWFMI. Residues 253 to 264 are Cytoplasmic-facing; the sequence is GDLSRPIGSSIK. Residues 265–285 traverse the membrane as a helical segment; sequence YMAFQFTCLLAIPAFIYFLIF. Residues 286 to 583 are Lumenal-facing; sequence SVHIKTLNVN…GREVYFLGNA (298 aa). Residues 320 to 374 form the MIR 1 domain; that stretch reads VAEVAVGSAVSLNHVGTAGGYLHSHLHNYPAGSMQQQVTLYPHIDQNNKWIIELA. N-linked (GlcNAc...) asparagine glycosylation is found at N380 and N386. 2 consecutive MIR domains span residues 384-444 and 454-510; these read FQNL…IEID and QEHI…IEEN. A helical transmembrane segment spans residues 584–604; that stretch reads VLWWSVTAFICTFIIGVAVEL. Over 605 to 623 the chain is Cytoplasmic; it reads LAWKLGVNILRDKHIINFH. The chain crosses the membrane as a helical span at residues 624–644; the sequence is YQVFQYLLGFAAHYFPYFFVG. The Lumenal portion of the chain corresponds to 645–646; that stretch reads QK. A helical membrane pass occupies residues 647–667; sequence LFLYDYLPAYYFGILAFGHAL. Topologically, residues 668-683 are cytoplasmic; sequence DLISTYISNKRNNTGY. The helical transmembrane segment at 684 to 704 threads the bilayer; the sequence is IVVAIFMVVCFYFFSEHSPLI. At 705–743 the chain is on the lumenal side; that stretch reads YATGWSSNLCKRSKWLGSWDFYCNSLLLSDSHYELNAES.

Belongs to the glycosyltransferase 39 family. In terms of assembly, PMT3 and PMT5 form a functional heterodimer. Also forms a minor complex with PMT2.

It is found in the endoplasmic reticulum membrane. It catalyses the reaction a di-trans,poly-cis-dolichyl beta-D-mannosyl phosphate + L-seryl-[protein] = 3-O-(alpha-D-mannosyl)-L-seryl-[protein] + a di-trans,poly-cis-dolichyl phosphate + H(+). The catalysed reaction is a di-trans,poly-cis-dolichyl beta-D-mannosyl phosphate + L-threonyl-[protein] = 3-O-(alpha-D-mannosyl)-L-threonyl-[protein] + a di-trans,poly-cis-dolichyl phosphate + H(+). It participates in protein modification; protein glycosylation. Protein O-mannosyltransferase involved in O-glycosylation which is essential for cell wall rigidity. Forms a heterodimeric complex with PMT3 and more rarely with PMT2 to transfer mannose from Dol-P-mannose to Ser or Thr residues on proteins. This Saccharomyces cerevisiae (strain ATCC 204508 / S288c) (Baker's yeast) protein is Dolichyl-phosphate-mannose--protein mannosyltransferase 5.